A 271-amino-acid chain; its full sequence is Enolase-phosphatase E1 (271 aa).

Mg(2+)-binding residues include aspartate 18 and glutamate 20. Substrate contacts are provided by residues 144–145 and lysine 194; that span reads SS. Aspartate 221 is a binding site for Mg(2+).

The protein belongs to the HAD-like hydrolase superfamily. MasA/MtnC family. Monomer. It depends on Mg(2+) as a cofactor.

The protein resides in the cytoplasm. The protein localises to the nucleus. The catalysed reaction is 5-methylsulfanyl-2,3-dioxopentyl phosphate + H2O = 1,2-dihydroxy-5-(methylsulfanyl)pent-1-en-3-one + phosphate. Its pathway is amino-acid biosynthesis; L-methionine biosynthesis via salvage pathway; L-methionine from S-methyl-5-thio-alpha-D-ribose 1-phosphate: step 3/6. The protein operates within amino-acid biosynthesis; L-methionine biosynthesis via salvage pathway; L-methionine from S-methyl-5-thio-alpha-D-ribose 1-phosphate: step 4/6. Functionally, bifunctional enzyme that catalyzes the enolization of 2,3-diketo-5-methylthiopentyl-1-phosphate (DK-MTP-1-P) into the intermediate 2-hydroxy-3-keto-5-methylthiopentenyl-1-phosphate (HK-MTPenyl-1-P), which is then dephosphorylated to form the acireductone 1,2-dihydroxy-3-keto-5-methylthiopentene (DHK-MTPene). The protein is Enolase-phosphatase E1 of Candida albicans (strain WO-1) (Yeast).